Reading from the N-terminus, the 193-residue chain is Holliday junction branch migration complex subunit RuvA (193 aa).

Positions 1 to 64 (MIGRIAGTLI…EDAHLLYGFG (64 aa)) are domain I. Positions 65 to 143 (TASERNTFRE…AELGHVPGTP (79 aa)) are domain II. The interval 144–151 (AVPDSAVD) is flexible linker. Positions 151-193 (DVLNALLALGYSEKEAAAAIKQVPAGTGVSDGIKLALKALSKA) are domain III.

Belongs to the RuvA family. As to quaternary structure, homotetramer. Forms an RuvA(8)-RuvB(12)-Holliday junction (HJ) complex. HJ DNA is sandwiched between 2 RuvA tetramers; dsDNA enters through RuvA and exits via RuvB. An RuvB hexamer assembles on each DNA strand where it exits the tetramer. Each RuvB hexamer is contacted by two RuvA subunits (via domain III) on 2 adjacent RuvB subunits; this complex drives branch migration. In the full resolvosome a probable DNA-RuvA(4)-RuvB(12)-RuvC(2) complex forms which resolves the HJ.

The protein localises to the cytoplasm. Functionally, the RuvA-RuvB-RuvC complex processes Holliday junction (HJ) DNA during genetic recombination and DNA repair, while the RuvA-RuvB complex plays an important role in the rescue of blocked DNA replication forks via replication fork reversal (RFR). RuvA specifically binds to HJ cruciform DNA, conferring on it an open structure. The RuvB hexamer acts as an ATP-dependent pump, pulling dsDNA into and through the RuvAB complex. HJ branch migration allows RuvC to scan DNA until it finds its consensus sequence, where it cleaves and resolves the cruciform DNA. This is Holliday junction branch migration complex subunit RuvA from Cupriavidus necator (strain ATCC 17699 / DSM 428 / KCTC 22496 / NCIMB 10442 / H16 / Stanier 337) (Ralstonia eutropha).